Here is a 125-residue protein sequence, read N- to C-terminus: Holo-[acyl-carrier-protein] synthase (125 aa).

Residues Asp-8 and Glu-57 each coordinate Mg(2+).

This sequence belongs to the P-Pant transferase superfamily. AcpS family. Mg(2+) serves as cofactor.

It is found in the cytoplasm. It catalyses the reaction apo-[ACP] + CoA = holo-[ACP] + adenosine 3',5'-bisphosphate + H(+). Functionally, transfers the 4'-phosphopantetheine moiety from coenzyme A to a Ser of acyl-carrier-protein. The polypeptide is Holo-[acyl-carrier-protein] synthase (Geotalea daltonii (strain DSM 22248 / JCM 15807 / FRC-32) (Geobacter daltonii)).